We begin with the raw amino-acid sequence, 505 residues long: Trans-cinnamate 4-monooxygenase (505 aa).

The helical transmembrane segment at 3-23 (LLLLEKTLLALFLAAITAITI) threads the bilayer. Residues 213–218 (RSRLAQ) and alanine 306 each bind (E)-cinnamate. Heme is bound at residue cysteine 447.

It belongs to the cytochrome P450 family. It depends on heme as a cofactor.

The protein localises to the membrane. The catalysed reaction is (E)-cinnamate + reduced [NADPH--hemoprotein reductase] + O2 = (E)-4-coumarate + oxidized [NADPH--hemoprotein reductase] + H2O + H(+). The protein operates within phenylpropanoid metabolism; trans-4-coumarate biosynthesis; trans-4-coumarate from trans-cinnamate: step 1/1. Functionally, catalyzes the first oxidative step of the phenylpropanoid pathway in higher plants by transforming trans-cinnamate into p-coumarate. The compounds formed by this pathway are essential components for lignification, pollination, and defense against ultraviolet light, predators and pathogens. The chain is Trans-cinnamate 4-monooxygenase (CYP73A9) from Pisum sativum (Garden pea).